We begin with the raw amino-acid sequence, 124 residues long: Predicted GPI-anchored protein 11 (124 aa).

Residues 1–18 (MKFQFVTALALASTMAVA) form the signal peptide. The interval 38-59 (REGGSTGAELQDNNQPTAGLFG) is disordered. Ser107 carries the GPI-anchor amidated serine lipid modification. Positions 108–124 (GAAGGVGNLFSGILGGL) are cleaved as a propeptide — removed in mature form.

The protein localises to the cell membrane. The chain is Predicted GPI-anchored protein 11 (PGA11) from Candida albicans (strain SC5314 / ATCC MYA-2876) (Yeast).